The primary structure comprises 296 residues: GTPase Era (296 aa).

The 168-residue stretch at 7–174 folds into the Era-type G domain; that stretch reads RTGFVAVVGR…LDEIAARLPE (168 aa). The interval 15–22 is G1; it reads GRPNVGKS. Residue 15–22 coordinates GTP; that stretch reads GRPNVGKS. A G2 region spans residues 41 to 45; the sequence is QTTRH. The tract at residues 62–65 is G3; that stretch reads DTPG. Residues 62-66 and 123-126 each bind GTP; these read DTPGF and SKID. Residues 123-126 are G4; that stretch reads SKID. The G5 stretch occupies residues 153–155; it reads VSA. Positions 205 to 281 constitute a KH type-2 domain; sequence VGDELPYGCT…HLEVYIKVRK (77 aa).

This sequence belongs to the TRAFAC class TrmE-Era-EngA-EngB-Septin-like GTPase superfamily. Era GTPase family. Monomer.

It is found in the cytoplasm. The protein resides in the cell inner membrane. Its function is as follows. An essential GTPase that binds both GDP and GTP, with rapid nucleotide exchange. Plays a role in 16S rRNA processing and 30S ribosomal subunit biogenesis and possibly also in cell cycle regulation and energy metabolism. The chain is GTPase Era from Bordetella petrii (strain ATCC BAA-461 / DSM 12804 / CCUG 43448).